The primary structure comprises 267 residues: Eukaryotic translation initiation factor 3 subunit J (267 aa).

The tract at residues 1–70 is disordered; sequence MSWNDDDVFA…KDKKSSTDQV (70 aa). Over residues 24-38 the composition is skewed to acidic residues; that stretch reads WDAEEPIMESWDAEE. Over residues 39–66 the composition is skewed to basic and acidic residues; the sequence is TPAKKETSPKPDSKKNAKKDSKKDKKSS. A coiled-coil region spans residues 192–220; the sequence is IESIRQSIATLNVLMKDKEREERRARLAK.

Belongs to the eIF-3 subunit J family. As to quaternary structure, component of the eukaryotic translation initiation factor 3 (eIF-3) complex.

It localises to the cytoplasm. Functionally, component of the eukaryotic translation initiation factor 3 (eIF-3) complex, which is involved in protein synthesis of a specialized repertoire of mRNAs and, together with other initiation factors, stimulates binding of mRNA and methionyl-tRNAi to the 40S ribosome. The eIF-3 complex specifically targets and initiates translation of a subset of mRNAs involved in cell proliferation. The sequence is that of Eukaryotic translation initiation factor 3 subunit J from Vanderwaltozyma polyspora (strain ATCC 22028 / DSM 70294 / BCRC 21397 / CBS 2163 / NBRC 10782 / NRRL Y-8283 / UCD 57-17) (Kluyveromyces polysporus).